We begin with the raw amino-acid sequence, 146 residues long: Transcriptional regulator MraZ (146 aa).

SpoVT-AbrB domains lie at 5-48 (TSYH…TLEE) and 77-120 (ASEC…SRAK).

The protein belongs to the MraZ family. Forms oligomers.

It localises to the cytoplasm. It is found in the nucleoid. This is Transcriptional regulator MraZ from Desulfosudis oleivorans (strain DSM 6200 / JCM 39069 / Hxd3) (Desulfococcus oleovorans).